Here is a 234-residue protein sequence, read N- to C-terminus: 1-(5-phosphoribosyl)-5-[(5-phosphoribosylamino)methylideneamino] imidazole-4-carboxamide isomerase (234 aa).

The Proton acceptor role is filled by Asp9. Residue Asp131 is the Proton donor of the active site.

This sequence belongs to the HisA/HisF family.

The protein localises to the cytoplasm. The enzyme catalyses 1-(5-phospho-beta-D-ribosyl)-5-[(5-phospho-beta-D-ribosylamino)methylideneamino]imidazole-4-carboxamide = 5-[(5-phospho-1-deoxy-D-ribulos-1-ylimino)methylamino]-1-(5-phospho-beta-D-ribosyl)imidazole-4-carboxamide. It functions in the pathway amino-acid biosynthesis; L-histidine biosynthesis; L-histidine from 5-phospho-alpha-D-ribose 1-diphosphate: step 4/9. This Staphylococcus epidermidis (strain ATCC 35984 / DSM 28319 / BCRC 17069 / CCUG 31568 / BM 3577 / RP62A) protein is 1-(5-phosphoribosyl)-5-[(5-phosphoribosylamino)methylideneamino] imidazole-4-carboxamide isomerase.